A 370-amino-acid polypeptide reads, in one-letter code: uncharacterized protein (370 aa).

The OBG-type G domain occupies 62-293 (ATVALVGFPS…LKERMWRALG (232 aa)). GTP-binding positions include 68–75 (GFPSVGKS), 114–118 (DVPGL), and 243–246 (NKVD). The region spanning 293-368 (GLIRIYMDKP…EDEDVLRVVA (76 aa)) is the TGS domain.

This sequence belongs to the TRAFAC class OBG-HflX-like GTPase superfamily. OBG GTPase family.

This is an uncharacterized protein from Halobacterium salinarum (strain ATCC 700922 / JCM 11081 / NRC-1) (Halobacterium halobium).